We begin with the raw amino-acid sequence, 148 residues long: Putative pre-16S rRNA nuclease (148 aa).

Belongs to the YqgF nuclease family.

Its subcellular location is the cytoplasm. Functionally, could be a nuclease involved in processing of the 5'-end of pre-16S rRNA. This chain is Putative pre-16S rRNA nuclease, found in Nitrosomonas europaea (strain ATCC 19718 / CIP 103999 / KCTC 2705 / NBRC 14298).